Consider the following 316-residue polypeptide: MKIVKISPRGYCYGVVDAMVIARNAALDTSLPRPIYILGMIVHNKHVTDAFEEDGIITLDGPSRLDILDKIDSGTVIFTAHGVSPEVKQRAKEKGLTTIDATCPDVTKTHDLIEAKKAEGYHVIYIGKKNHPEPEGAVGIAPDIVHLIEKADDLKTLEIPTNKILVTNQTTMSQWDVQHLMEDIQKKFPTAEFHKEICLATQVRQEAVAKQADVADLTIVVGDPKSNNSNRLAQVSQEIAGTKAYRVADVSEIKLEWLQGVENVAVTAGASTPTPITKEVIAFLEQYDPMNPATWERVRKVPLQKILPRVKVKKEQ.

Position 12 (C12) interacts with [4Fe-4S] cluster. H43 and H81 together coordinate (2E)-4-hydroxy-3-methylbut-2-enyl diphosphate. Dimethylallyl diphosphate-binding residues include H43 and H81. 2 residues coordinate isopentenyl diphosphate: H43 and H81. C103 contacts [4Fe-4S] cluster. H131 provides a ligand contact to (2E)-4-hydroxy-3-methylbut-2-enyl diphosphate. Residue H131 coordinates dimethylallyl diphosphate. An isopentenyl diphosphate-binding site is contributed by H131. E133 serves as the catalytic Proton donor. T170 serves as a coordination point for (2E)-4-hydroxy-3-methylbut-2-enyl diphosphate. C198 is a binding site for [4Fe-4S] cluster. (2E)-4-hydroxy-3-methylbut-2-enyl diphosphate contacts are provided by S226, N228, and S271. S226, N228, and S271 together coordinate dimethylallyl diphosphate. S226, N228, and S271 together coordinate isopentenyl diphosphate.

Belongs to the IspH family. The cofactor is [4Fe-4S] cluster.

It carries out the reaction isopentenyl diphosphate + 2 oxidized [2Fe-2S]-[ferredoxin] + H2O = (2E)-4-hydroxy-3-methylbut-2-enyl diphosphate + 2 reduced [2Fe-2S]-[ferredoxin] + 2 H(+). It catalyses the reaction dimethylallyl diphosphate + 2 oxidized [2Fe-2S]-[ferredoxin] + H2O = (2E)-4-hydroxy-3-methylbut-2-enyl diphosphate + 2 reduced [2Fe-2S]-[ferredoxin] + 2 H(+). Its pathway is isoprenoid biosynthesis; dimethylallyl diphosphate biosynthesis; dimethylallyl diphosphate from (2E)-4-hydroxy-3-methylbutenyl diphosphate: step 1/1. It functions in the pathway isoprenoid biosynthesis; isopentenyl diphosphate biosynthesis via DXP pathway; isopentenyl diphosphate from 1-deoxy-D-xylulose 5-phosphate: step 6/6. In terms of biological role, catalyzes the conversion of 1-hydroxy-2-methyl-2-(E)-butenyl 4-diphosphate (HMBPP) into a mixture of isopentenyl diphosphate (IPP) and dimethylallyl diphosphate (DMAPP). Acts in the terminal step of the DOXP/MEP pathway for isoprenoid precursor biosynthesis. The chain is 4-hydroxy-3-methylbut-2-enyl diphosphate reductase from Bacillus thuringiensis (strain Al Hakam).